We begin with the raw amino-acid sequence, 292 residues long: 4-hydroxy-tetrahydrodipicolinate synthase (292 aa).

Pyruvate is bound at residue T45. The active-site Proton donor/acceptor is Y133. K161 (schiff-base intermediate with substrate) is an active-site residue. Residue I203 participates in pyruvate binding.

Belongs to the DapA family. Homotetramer; dimer of dimers.

The protein localises to the cytoplasm. It carries out the reaction L-aspartate 4-semialdehyde + pyruvate = (2S,4S)-4-hydroxy-2,3,4,5-tetrahydrodipicolinate + H2O + H(+). The protein operates within amino-acid biosynthesis; L-lysine biosynthesis via DAP pathway; (S)-tetrahydrodipicolinate from L-aspartate: step 3/4. Catalyzes the condensation of (S)-aspartate-beta-semialdehyde [(S)-ASA] and pyruvate to 4-hydroxy-tetrahydrodipicolinate (HTPA). This is 4-hydroxy-tetrahydrodipicolinate synthase from Salmonella typhi.